A 941-amino-acid chain; its full sequence is Cilia- and flagella-associated protein 69 (941 aa).

The span at 1–14 shows a compositional bias: low complexity; that stretch reads MWTEEAGATAEAQE. Residues 1–26 are disordered; it reads MWTEEAGATAEAQESGIRNKSSSSSQ. Over residues 16-26 the composition is skewed to polar residues; sequence GIRNKSSSSSQ.

Highly expressed in the testis, specifically in sperm (at protein level). Expressed in the brain, kidney, liver, lung, and intestine.

It is found in the cell projection. The protein resides in the cilium. It localises to the flagellum. In terms of biological role, cilium- and flagellum-associated protein. In the olfactory epithelium, regulates the speed of activation and termination of the odor response and thus contributes to the robustness of olfactory transduction pathways. Required for sperm flagellum assembly and stability. The chain is Cilia- and flagella-associated protein 69 from Homo sapiens (Human).